The sequence spans 415 residues: Acetate kinase (415 aa).

Asparagine 8 serves as a coordination point for Mg(2+). Lysine 15 contacts ATP. Arginine 106 contributes to the substrate binding site. The Proton donor/acceptor role is filled by aspartate 163. Residues 222–226 (HLGNG), 296–298 (DLR), and 344–348 (GIGEN) contribute to the ATP site. Glutamate 397 serves as a coordination point for Mg(2+).

It belongs to the acetokinase family. As to quaternary structure, homodimer. Requires Mg(2+) as cofactor. Mn(2+) is required as a cofactor.

It localises to the cytoplasm. It catalyses the reaction acetate + ATP = acetyl phosphate + ADP. It participates in metabolic intermediate biosynthesis; acetyl-CoA biosynthesis; acetyl-CoA from acetate: step 1/2. Catalyzes the formation of acetyl phosphate from acetate and ATP. Can also catalyze the reverse reaction. This is Acetate kinase from Thermosynechococcus vestitus (strain NIES-2133 / IAM M-273 / BP-1).